The following is a 281-amino-acid chain: RAD52 motif-containing protein 1 (281 aa).

The segment at 1-92 is necessary for nuclear localization and for nucleolar accumulation in response to heat shock; the sequence is MAELISFVVP…KPLFQTSPVK (92 aa). The 84-residue stretch at 15–98 folds into the RRM domain; the sequence is KVLLVWDLST…SPVKVRLGTR (84 aa). The tract at residues 90 to 133 is necessary for nuclear and nucleolar localization; the sequence is PVKVRLGTRHKALQHQAFALNSSRCQELANYYFGFSGWSKRIIK.

Homodimer.

The protein localises to the nucleus. It is found in the cytoplasm. The protein resides in the nucleolus. It localises to the cajal body. Its subcellular location is the PML body. Its function is as follows. May confer resistance to the antitumor agent cisplatin. Binds to DNA and RNA. The sequence is that of RAD52 motif-containing protein 1 (Rdm1) from Mus musculus (Mouse).